We begin with the raw amino-acid sequence, 83 residues long: MHTTTILICFFIFLVQVSTMDAHTDKYVRTLCGKTAIRNIANLCPPKPEMKGICSTGEYPSITEYCSMGFSDSQIKFMCCDNQ.

Positions 1 to 21 (MHTTTILICFFIFLVQVSTMD) are cleaved as a signal peptide. 3 disulfide bridges follow: C32–C66, C44–C79, and C54–C80.

The protein belongs to the insulin family.

It localises to the secreted. In Caenorhabditis elegans, this protein is Probable insulin-like peptide alpha-type 2 (ins-22).